We begin with the raw amino-acid sequence, 405 residues long: Scarecrow-like protein 23 (405 aa).

A disordered region spans residues 1 to 20 (MTTKRIDRDLPSSDDPSSAK). Residues 31 to 400 (ENDGAAAIKL…LSLLTASAWK (370 aa)) form the GRAS domain. Residues 38–102 (IKLLSLLLQC…ISSYLSGACS (65 aa)) form a leucine repeat I (LRI) region. The short motif at 45 to 49 (LQCAE) is the LxCxE motif element. The interval 121 to 186 (LQTYNSVSPL…RKLRSIRITG (66 aa)) is VHIID. The short motif at 152–156 (VHIID) is the VHIID element. The interval 196 to 228 (STGRRLADFASSLNLPFEFHPIEGIIGNLIDPS) is leucine repeat II (LRII). The tract at residues 238–327 (VVVHWMQHRL…QIVLGTEIRN (90 aa)) is PFYRE. The tract at residues 330-400 (AHGGGRRKRM…LSLLTASAWK (71 aa)) is SAW.

The protein belongs to the GRAS family. Interacts with SHR. Expressed in seedlings, cotyledons, shoot apex, leaves and flowers.

It is found in the nucleus. In terms of biological role, probable transcription factor involved in plant development. This Arabidopsis thaliana (Mouse-ear cress) protein is Scarecrow-like protein 23 (SCL23).